A 1475-amino-acid polypeptide reads, in one-letter code: Sex-determining transformer protein 2 (1475 aa).

The first 31 residues, 1 to 31 (MKLKYNKLLVSVVIVTFVTFGLLLAECFGKS), serve as a signal peptide directing secretion. 11 helical membrane passes run 446-466 (TIHFVVNVHSLIVILFTIFVW), 474-494 (AFMFFVRDALTCLLFCFVCST), 496-516 (GVIVLDTELIKYIIVLTLANL), 589-609 (WGCTSILIFPIVFVYWYFIDS), 737-757 (GVILCIPAILLIVISIGLLFI), 902-922 (AVGVLYEHYHRIAVVWNLFAF), 928-948 (AGIFIILLSIITFIFAITPTI), 952-972 (FLFSLLVVGTQIEVAALVHLF), 979-999 (IYTNLALFAGFLAAWDPFCAL), 1034-1054 (IAQFFVLLITAFSILAIICSI), and 1060-1080 (IFFVPTVILIVIQIVAVFNSI). Residues 1133-1273 (EFSIKRSSPP…RERNLMNKRS (141 aa)) form an interaction with fem-3 region. 2 disordered regions span residues 1142-1194 (PCRY…GDNT) and 1267-1330 (NLMN…VDEP). Positions 1178–1188 (RSPKTGNKRVR) are enriched in basic residues. Basic and acidic residues predominate over residues 1276-1310 (QRRESRNIEKMKKSQENLDKEKSEEKISESKKNQD). The tract at residues 1392–1413 (CEDIYWTHRTGQLPPGLQVPRR) is MX regulatory domain; required for tra-1 binding. The segment at 1424–1475 (TPPPEDLNWVPPAESPPIPIPQQAFDLLEERRRNHREQQDEAREGDLSDPEV) is disordered. Residues 1451-1469 (LEERRRNHREQQDEAREGD) are compositionally biased toward basic and acidic residues.

As to quaternary structure, interacts with tra-1 and fem-3. Post-translationally, undergoes cleavage by tra-3 to produce a feminizing carboxy-terminal isoform Tra-2B. As to expression, somatic and germline tissues. Isoform Tra-2B is specific to oocytes.

It is found in the membrane. In terms of biological role, plays a major role in controlling sexual cell fates. Promotes female development in XX animals where it sequesters one or more of the FEM proteins to the membrane thereby freeing the tra-1 protein (a putative transcription factor) to enter the nucleus and promote female development. In XO animals it acts as a receptor for her-1 which prevents it from binding to FEM proteins thereby repressing the activity of tra-1. Negatively regulates male development when bound to fem-3 and is required together with tra-1 for promoting spermatogenesis. Also required for feminizing tra-3 activity. The protein is Sex-determining transformer protein 2 (tra-2) of Caenorhabditis elegans.